The sequence spans 2344 residues: MRGPHGVSWRVPWLCLSCLCSCLLLLPVNTSTTSAPKTSTALPSSTNPSQMTSQVSNPTASSYRMTKNTGQASPMVTSSSITTLPQSQHTGSMKTTRNPQTTGTTEVTTTLSASSSDQVQVETTSQTTLSPDTTTTSHAPRESSSPPSTSVILTTTASTEGTSGDTGHTMAVTTQGSTPATTEISVTPSTQKMSPVSTFSTSTQEITTLSQSQHTGGMKTTRNPQTTGTTEVTTTLSASSSDHPTSSPESTPGNTAPRTTETSTTTTTKVLMTSLQQKLPTGSTLGTSTQELTTLPQSQHTGIMKTTSRTQTTTPTEVTTRTLSASSSDHRQAETSSQTTLSPDTTTTSHAPRESSPPSTSVILTHGHREGTSGDTGHTMAVTTQGSTPATTEISVTPSTQKMSPVSTFSTSTQEITTLSQSQHTGGMKTTRNPQRTTPTEVTTSTLSASSSDQVQVETTSRATLSPDTTTTSHAPSVSSSSPSPPSTEGTSVDTGLTTAVTTQDSTPATTQGSLTSSSQTLSTVSPLSTSTQETSTQELTSSQSQHTGSMKTTHNPQTTRNTEVTTTLSASSSDQVQVETTSQTTLSDATTTSHAPRESSSPPSTSDILTTMASTEGTSGDTGHTMAVTTQGSTPATTEISVTPSTQKMSPVSTFSTSTQEITTLSQSQHTGGMKTTRNPQTTGTTEVTTTLSASSSDQVQAETSSQTTLSPDTTTTSHAPRESSSPPSTSDMLTTTASTEGTSGDTGHTTAVTTQGSIPATTQLSTTFASQKMSTVSTPTTSSIQELSTLPQSQHTGSMEISSRPQTTSVTSTLSSSPSGSTPVQTRSVTSSSDERTNPTSSGVSNTSPATTEVLTPTSSPESTPGNTAPRTTETSTTTTTKVLMTSLQQKLPTGSTLGTSTPTEVTTTLSASSSDQVQVETTSQTTLSPDATTTSHAPRESSSPPSTSVILTTMASTEGTSGDTGHTTAVTDQGSTPATTEISVTPSTQKMSTVSTLVTSTQELTSSQSQRTGSMGTSSKPQATTPTEVTTSTLSSFSRGSLFSARNCCLQTKKPPLPAVVCLPDPSSVPSLMHSSKPQATTPTEVTTSTLSSFSRGSTQTQTVSWETSSSGKITAPSTSSRRTPSVATSDIFTTTDSTSGNAGHTLLTGSHSVITSRVASTTLGRLSTVAHRQSTQRSSTHSQSYLTESMGASSTSETSLLTEATTETSLCLFTWTHCDRDLLSWTSSSGLTTKTDNDRSTALSATSLTLPAPSTSTASRSTVPPAPLPPDQGISLFQIGFPLGSLCGIPSILQITVRSFSPSQTTMSSPTPTHLKEASQEGSVCHSGHSGVMLISLAPGEPYFRTTTSHFTMSSTSLIRKVESLINEFTSDWSFKPSDTEVTWVNVPAYPAQGRTLGANTYQAILSTDGSRSYALFLYQSGGMRWDVTQGLYNRVLMGFSSGDGYFENSPLIFRPAVEKYRPDRFLTPNYGSGDSRSTGYTGRCGPTTGSSVCSGWKVSLSSPAGAGTRFPALAPGSRDFGSGSSTQVCGAGSYAASLRAGRVLYVWHLGEFREGWRMHSPWQFDEDEGRHRTGLAAGTTSPLSASSTSSGGPELVVLGTRPPRPAWTFGDPHITTLDNAKYTFNGLGYFLLVQAQDRNSSFLLEGRTAQTDSANATNFIAFAAQYNTSSLKSPITVQWFLEPNDTIRVVHNNQTVAFNTSDTEDLPVFNATGVLLIQNGSQVSANFDGTVTISVIALSNILHASSSLSEEYRNHTKGLLGVWNDNPEDDFRMPNGSTIPSNTSEETLFHYGMTSETNGIGLLGVRTDPLPSEFTPIFLSQLWNKSGAGEDLISGCNEDAQCKFDILATGNRDIGQSTNSILRTFRHVNGTLNQYPPPIHYSSKIQAYKGREQWPLRSPATLRMSYSASPTSAVAFELFENGSLHVDTNIPRRTYLEILARDVKTNLSSVLQPETVACFCSKEEQCLYNETSKEGNSSTEVTSCKCDGNSFGRLCEHSKDLCTEPCFPNVDCIPGKGCQACPPNMTGDGRHCVAVEISEFCQNHSCPVNYCYNHGHCDISGPPDCQPTCTCAPAFTGNRCFLAGNNFTPIIYKELPLRTITLSLREDENASNADVNASVANVLENLDMRAFLSNSLVELIRTSPGAPVLGKPIHHWKVVSHFKYRPRGPLIHYLNNQLISAVMEAFLLQARQERRKRSGEARKNVRFFPISRADVQDGMALNLSMLDEYFTCDGYKGYHLVYSPQDGVTCVSPCSEGYCHNGGQCKHLPDGPQCTCATFSIYTSWGERCEHLSVKLGAFFGILFGALGALLLLAILACVVFHFCGCSMNKFSYPLDSEL.

The signal sequence occupies residues 1 to 30; that stretch reads MRGPHGVSWRVPWLCLSCLCSCLLLLPVNT. A compositionally biased stretch (low complexity) spans 32–46; that stretch reads TTSAPKTSTALPSST. Disordered stretches follow at residues 32 to 760, 773 to 1036, 1072 to 1130, 1171 to 1197, and 1233 to 1269; these read TTSA…QGSI, QKMS…TTST, VPSL…TPSV, STVA…MGAS, and SGLT…TVPP. Residues 47–100 are compositionally biased toward polar residues; that stretch reads NPSQMTSQVSNPTASSYRMTKNTGQASPMVTSSSITTLPQSQHTGSMKTTRNPQ. The variable number of tandem repeats (VNTR) stretch occupies residues 81 to 1006; the sequence is ITTLPQSQHT…VSTLVTSTQE (926 aa). Composition is skewed to low complexity over residues 101-116 and 123-137; these read TTGT…ASSS and TTSQ…TTTS. The O-linked (GalNAc...) threonine glycan is linked to threonine 133. The segment covering 142-225 has biased composition (polar residues); it reads ESSSPPSTSV…GGMKTTRNPQ (84 aa). Low complexity predominate over residues 226 to 273; that stretch reads TTGTTEVTTTLSASSSDHPTSSPESTPGNTAPRTTETSTTTTTKVLMT. Polar residues predominate over residues 274–305; sequence SLQQKLPTGSTLGTSTQELTTLPQSQHTGIMK. 2 stretches are compositionally biased toward low complexity: residues 306–322 and 335–349; these read TTSR…TTRT and TSSQ…TTTS. Polar residues predominate over residues 373–436; the sequence is SGDTGHTMAV…GMKTTRNPQR (64 aa). Residues threonine 391 and threonine 392 are each glycosylated (O-linked (GalNAc...) threonine). The segment covering 437–446 has biased composition (low complexity); that stretch reads TTPTEVTTST. The segment covering 447 to 468 has biased composition (polar residues); sequence LSASSSDQVQVETTSRATLSPD. The span at 469 to 492 shows a compositional bias: low complexity; it reads TTTTSHAPSVSSSSPSPPSTEGTS. An O-linked (GalNAc...) threonine glycan is attached at threonine 470. An O-linked (GalNAc...) serine glycan is attached at serine 479. The span at 493-509 shows a compositional bias: polar residues; that stretch reads VDTGLTTAVTTQDSTPA. Low complexity predominate over residues 510-546; sequence TTQGSLTSSSQTLSTVSPLSTSTQETSTQELTSSQSQ. The span at 547-580 shows a compositional bias: polar residues; that stretch reads HTGSMKTTHNPQTTRNTEVTTTLSASSSDQVQVE. The span at 581 to 594 shows a compositional bias: low complexity; the sequence is TTSQTTLSDATTTS. Polar residues predominate over residues 599-682; it reads ESSSPPSTSD…GGMKTTRNPQ (84 aa). Composition is skewed to low complexity over residues 683–698 and 705–719; these read TTGT…ASSS and TSSQ…TTTS. 2 stretches are compositionally biased toward polar residues: residues 724-760 and 773-807; these read ESSS…QGSI and QKMS…SSRP. Residues 808–828 are compositionally biased toward low complexity; sequence QTTSVTSTLSSSPSGSTPVQT. Residues 829–868 show a composition bias toward polar residues; the sequence is RSVTSSSDERTNPTSSGVSNTSPATTEVLTPTSSPESTPG. The span at 869-915 shows a compositional bias: low complexity; that stretch reads NTAPRTTETSTTTTTKVLMTSLQQKLPTGSTLGTSTPTEVTTTLSAS. The segment covering 916-994 has biased composition (polar residues); sequence SSDQVQVETT…ISVTPSTQKM (79 aa). The span at 995–1015 shows a compositional bias: low complexity; sequence STVSTLVTSTQELTSSQSQRT. The segment covering 1016–1026 has biased composition (polar residues); it reads GSMGTSSKPQA. Residues 1027-1036 show a composition bias toward low complexity; that stretch reads TTPTEVTTST. Over residues 1072 to 1083 the composition is skewed to polar residues; it reads VPSLMHSSKPQA. Over residues 1084 to 1096 the composition is skewed to low complexity; it reads TTPTEVTTSTLSS. Over residues 1097–1116 the composition is skewed to polar residues; the sequence is FSRGSTQTQTVSWETSSSGK. Composition is skewed to low complexity over residues 1118 to 1130, 1175 to 1188, and 1233 to 1267; these read TAPS…TPSV, HRQS…HSQS, and SGLT…RSTV. The NIDO domain occupies 1332-1492; the sequence is GHSGVMLISL…TGYTGRCGPT (161 aa). Residues 1574–1597 form a disordered region; the sequence is GRHRTGLAAGTTSPLSASSTSSGG. Residues 1580–1597 show a composition bias toward low complexity; it reads LAAGTTSPLSASSTSSGG. Positions 1609 to 1804 constitute a VWFD domain; that stretch reads RPAWTFGDPH…HYGMTSETNG (196 aa). 19 N-linked (GlcNAc...) asparagine glycosylation sites follow: asparagine 1644, asparagine 1660, asparagine 1672, asparagine 1689, asparagine 1698, asparagine 1704, asparagine 1715, asparagine 1724, asparagine 1759, asparagine 1780, asparagine 1787, asparagine 1829, asparagine 1874, asparagine 1926, asparagine 1951, asparagine 1974, asparagine 1981, asparagine 2029, and asparagine 2048. Residues 2047–2086 enclose the EGF-like 1 domain; that stretch reads QNHSCPVNYCYNHGHCDISGPPDCQPTCTCAPAFTGNRCF. Intrachain disulfides connect cysteine 2051–cysteine 2062, cysteine 2056–cysteine 2074, and cysteine 2076–cysteine 2085. Residues asparagine 2114 and asparagine 2121 are each glycosylated (N-linked (GlcNAc...) asparagine). Residues 2173–2193 traverse the membrane as a helical segment; the sequence is GPLIHYLNNQLISAVMEAFLL. Residue asparagine 2227 is glycosylated (N-linked (GlcNAc...) asparagine). In terms of domain architecture, EGF-like 2 spans 2256–2295; it reads VSPCSEGYCHNGGQCKHLPDGPQCTCATFSIYTSWGERCE. 3 disulfides stabilise this stretch: cysteine 2259/cysteine 2270, cysteine 2264/cysteine 2279, and cysteine 2281/cysteine 2294. A helical membrane pass occupies residues 2301 to 2321; the sequence is LGAFFGILFGALGALLLLAIL.

As to quaternary structure, a heterodimeric complex, composed of a mucin-4 alpha chain and a cysteine-rich transmembrane mucin-4 beta chain. Mucin-4 beta chain interacts with ERBB2 via the EGF-like domain 1. In nonpolarized cells, associates with ERBB2 and ERBB3. Proteolytically cleaved into 2 subunits, mucin-4 alpha chain and mucin-4 beta chain. In terms of processing, mucin-4 alpha subunit is highly O-glycosylated. Post-translationally, mucin-4 beta subunit is predominantly N-glycosylated. As to expression, expression is developmentally regulated in the mammary gland, dramatically increases in the lactating gland compared with the virgin mammary gland, while decreasing again during mammary gland involution. Expressed in 13762 ascites cells. Overexpressed in some aggressive mammary tumors. Overexpression seems to block cell-cell and cell-matrix interactions to protect tumor cells from immune surveillance, and to promote metastasis.

The protein localises to the cell membrane. The protein resides in the secreted. Its function is as follows. Membrane-bound mucin, a family of highly glycosylated proteins that constitute the major component of the mucus, the slimy and viscous secretion covering epithelial surfaces. These glycoproteins play important roles in the protection of the epithelium and are implicated in epithelial renewal and differentiation. Regulates cellular behavior through both anti-adhesive effects on cell-cell and cell-extracellular matrix interactions and its ability to act as an intramembrane ligand for ERBB2. Plays an important role in proliferation and differentiation of epithelial cells by inducing specific phosphorylation of ERBB2. In polarized epithelial cells, segregates ERBB2 and other ERBB receptors and prevents ERBB2 from acting as a coreceptor. The interaction with ERBB2 leads to enhanced expression of CDKN1B. The formation of a MUC4-ERBB2-ERBB3-NRG1 complex leads to down-regulation of CDKN1B, resulting in repression of apoptosis and stimulation of proliferation. Its ability to promote tumor growth may be mainly due to repression of apoptosis as opposed to proliferation. This chain is Mucin-4 (Muc4), found in Rattus norvegicus (Rat).